We begin with the raw amino-acid sequence, 226 residues long: Probable transcriptional regulator RABBIT EARS (226 aa).

The C2H2-type zinc-finger motif lies at 55–77 (YSCSFCGREFKSAQALGGHMNVH). The segment at 80–102 (DRARLKQQSLSPSSTDQATPPEC) is disordered. Polar residues predominate over residues 85 to 97 (KQQSLSPSSTDQA). Positions 212–216 (LDLEL) match the EAR-like (transcriptional repression) motif.

Strongly expressed in inflorescences and flowers, and weakly in siliques, seedlings and roots. In flowers, it is expressed in petal primordia and their precursor cells. Also expressed in the lateral root caps and the basal cells of lateral roots.

It localises to the nucleus. In terms of biological role, probable transcriptional regulator essential for petal development. Required for the early development of the organ primordia of the second whorl. Acts downstream of AP1 and PTL. The chain is Probable transcriptional regulator RABBIT EARS (RBE) from Arabidopsis thaliana (Mouse-ear cress).